The chain runs to 407 residues: Immunoglobulin superfamily member 5 (407 aa).

Topologically, residues 1–266 (MGQKERSTAD…LGFSLPTWGK (266 aa)) are extracellular. Ig-like V-type domains lie at 39–139 (NEVI…LTVQ) and 142–231 (GELF…ATVN). Asn-59, Asn-103, Asn-210, and Asn-231 each carry an N-linked (GlcNAc...) asparagine glycan. Disulfide bonds link Cys-60–Cys-123 and Cys-163–Cys-215. Residues 267–285 (VGLGLAGTMLLTPTCTLTI) traverse the membrane as a helical segment. At 286–407 (RCCCCRRRCC…PEKVSNTTVV (122 aa)) the chain is on the cytoplasmic side. Over residues 320 to 331 (KSEKEKTNKETE) the composition is skewed to basic and acidic residues. The disordered stretch occupies residues 320–407 (KSEKEKTNKE…PEKVSNTTVV (88 aa)). Positions 389–407 (PQASFNLASPEKVSNTTVV) are enriched in polar residues.

The protein belongs to the immunoglobulin superfamily. In terms of assembly, interacts with MAGI1 at tight junctions, forms a tripartite complex with NPHS1. Interacts with LNX1 isoform 2 via its PDZ 2 domain, it may also interact with other isoforms containing this domain.

It is found in the apical cell membrane. It localises to the cell junction. Its subcellular location is the tight junction. In terms of biological role, provides, together with MAGI1, an adhesion machinery at tight junctions, which may regulate the permeability of kidney glomerulus and small intestinal epithelial cells. Mediates calcium-independent homophilic cell adhesion. In testis, it may function as a cell adhesion molecule rather than a tight-junction protein. It may participate in the adhesion between spermatogonia-spermatogonia, spermatogonia-Sertoli cells, and Sertoli cells-Sertoli cells. This is Immunoglobulin superfamily member 5 (IGSF5) from Homo sapiens (Human).